Consider the following 177-residue polypeptide: Nuclear export protein (177 aa).

2 consecutive short sequence motifs (nuclear export signal) follow at residues Leu-91–Leu-100 and Met-117–Leu-127.

As to quaternary structure, binds M1 protein. May interact with human nucleoporins and exportin XPO1/CRM1.

Its subcellular location is the virion. It is found in the host nucleus. Mediates the nuclear export of encapsidated genomic RNAs (ribonucleoproteins, RNPs). Acts as an adapter between viral RNPs complexes and the nuclear export machinery of the cell. Possesses no intrinsic RNA-binding activity, but includes a C-terminal M1-binding domain. This domain is believed to allow recognition of RNPs to which the M1 protein is bound. Because the M1 protein is not available in large quantities until the later stages of infection, such an indirect recognition mechanism probably ensures that genomic RNPs are not exported from the nucleus before sufficient quantities of viral mRNA and progeny genomic RNA have been synthesized. Furthermore, the RNPs enters the cytoplasm only when they have associated with the M1 protein that is necessary to guide them to the plasma membrane. May down-regulate viral RNA synthesis when overproduced. In Influenza C virus (strain C/Great lakes/1167/1954), this protein is Nuclear export protein (NS).